Consider the following 378-residue polypeptide: Cytochrome b (378 aa).

A run of 4 helical transmembrane segments spans residues 35–55 (FGSLLGLVLSIQLVTGIFLAM), 79–101 (WIIRLVHANGASFFFICLYCHIG), 114–134 (TWIMGVLLFILVMAAAFLGYV), and 180–200 (FFSLHFLVPFLVSLGAMLHIF). Heme b contacts are provided by histidine 85 and histidine 99. Residues histidine 184 and histidine 198 each coordinate heme b. Histidine 203 contacts a ubiquinone. The next 4 membrane-spanning stretches (helical) occupy residues 226–246 (YSAKDLLGFFFMFFFIIFISF), 290–310 (LGGVLGLLCALLVLFSLPLTH), 326–346 (FFWLFIVSFLMLTIGGGQPVC), and 350–370 (VMCSQVWSCLYFTYFILCGPL).

The protein belongs to the cytochrome b family. In terms of assembly, the main subunits of complex b-c1 are: cytochrome b, cytochrome c1 and the Rieske protein. Heme b is required as a cofactor.

The protein localises to the mitochondrion inner membrane. Component of the ubiquinol-cytochrome c reductase complex (complex III or cytochrome b-c1 complex) that is part of the mitochondrial respiratory chain. The b-c1 complex mediates electron transfer from ubiquinol to cytochrome c. Contributes to the generation of a proton gradient across the mitochondrial membrane that is then used for ATP synthesis. The chain is Cytochrome b (mt:Cyt-b) from Paraspadella gotoi (Arrow worm).